Reading from the N-terminus, the 937-residue chain is Putative leucine-rich repeat receptor-like serine/threonine-protein kinase At3g53590 (937 aa).

An N-terminal signal peptide occupies residues 1–20 (MIPPNINVLIRSICINLVTS). Residues 21–547 (LPLNFAYIFI…LLAQTSGIRT (527 aa)) are Extracellular-facing. Residues Asn-50, Asn-63, Asn-90, and Asn-114 are each glycosylated (N-linked (GlcNAc...) asparagine). LRR repeat units follow at residues 102 to 126 (LLYLEILDVMWNNLTGRIPLEIGRI), 127 to 150 (SSLKLLLLNGNKFTGSLPPELGNL), 152 to 173 (NLNRLQVDENNITGSVPFSFGN), 174 to 198 (LRSIKHLHLNNNTISGEIPVELSKL), 200 to 222 (KLVHMILDNNNLTGTLPLELAQL), 223 to 249 (PSLTILQLDNNNFEGSTIPEAYGHFSR), 251 to 270 (VKLSLRNCGLQGSIPDLSRI), and 271 to 294 (ENLSYLDLSWNHLTGTIPESKLSD). Residues Asn-162, Asn-184, and Asn-210 are each glycosylated (N-linked (GlcNAc...) asparagine). Residues Asn-272 and Asn-295 are each glycosylated (N-linked (GlcNAc...) asparagine). LRR repeat units lie at residues 296-316 (MTTIELSYNHLTGSIPQSFSD), 317-341 (LNSLQLLSLENNSLSGSVPTEIWQD), and 343-360 (SFENNKLQVYDLNNNFSD). Asn-327, Asn-357, Asn-370, Asn-413, Asn-499, and Asn-516 each carry an N-linked (GlcNAc...) asparagine glycan. A helical membrane pass occupies residues 548-568 (IVWMMIVAGSVVAATVLSVTA). The Cytoplasmic portion of the chain corresponds to 569 to 937 (TLLYVRKRRE…SGFFHAVKPR (369 aa)). Positions 614–886 (FDSSTLIGRG…SKVVKELEGI (273 aa)) constitute a Protein kinase domain. ATP is bound by residues 620-628 (IGRGSYGKV) and Lys-642. The active-site Proton acceptor is Asp-738.

The protein belongs to the protein kinase superfamily. Ser/Thr protein kinase family.

Its subcellular location is the cell membrane. The catalysed reaction is L-seryl-[protein] + ATP = O-phospho-L-seryl-[protein] + ADP + H(+). It carries out the reaction L-threonyl-[protein] + ATP = O-phospho-L-threonyl-[protein] + ADP + H(+). The chain is Putative leucine-rich repeat receptor-like serine/threonine-protein kinase At3g53590 from Arabidopsis thaliana (Mouse-ear cress).